A 170-amino-acid chain; its full sequence is PQMLSANERLKNNFNILYNQIRQYPAYYFKVASNVPTYSDICQFFSVMYQGFQIVNHSGDVFIHACRENPQSKGDFVGDKFHISIAREQVPLAFQILSGLLFSEDSPIDKWKITDMNRVSQQSRVGIGAQFTLYVKSDQECSQYSALLLHKIRQFIMCLESNLLRSKIAP.

Histidine 82 (proton donor) is an active-site residue. Catalysis depends on lysine 112, which acts as the Proton acceptor.

Belongs to the phosphothreonine lyase family.

The protein localises to the secreted. In terms of biological role, catalyzes the removal of the phosphate group from the phosphothreonine in the mitogen-activated protein kinases such as MAPK2/ERK2, MAPK3/ERK1, MAPK8 and MAPK14 in an irreversible reaction, thus preventing the downstream phosphorylation of histone H3. This epigenetic modification results in inhibition of the transcription of a specific subset of pro-inflammatory genes, and ultimately to a reduced immune response against the invading pathogen. The diminished immune response enhances the bacterium's ability to disseminate and multiply within the host. The polypeptide is Phosphothreonine lyase OspF (ospF) (Shigella boydii).